The chain runs to 204 residues: Holliday junction branch migration complex subunit RuvA (204 aa).

The interval methionine 1–asparagine 64 is domain I. Residues histidine 65 to proline 143 are domain II. The segment at alanine 144–leucine 155 is flexible linker. A domain III region spans residues arginine 156–valine 204.

This sequence belongs to the RuvA family. As to quaternary structure, homotetramer. Forms an RuvA(8)-RuvB(12)-Holliday junction (HJ) complex. HJ DNA is sandwiched between 2 RuvA tetramers; dsDNA enters through RuvA and exits via RuvB. An RuvB hexamer assembles on each DNA strand where it exits the tetramer. Each RuvB hexamer is contacted by two RuvA subunits (via domain III) on 2 adjacent RuvB subunits; this complex drives branch migration. In the full resolvosome a probable DNA-RuvA(4)-RuvB(12)-RuvC(2) complex forms which resolves the HJ.

It localises to the cytoplasm. The RuvA-RuvB-RuvC complex processes Holliday junction (HJ) DNA during genetic recombination and DNA repair, while the RuvA-RuvB complex plays an important role in the rescue of blocked DNA replication forks via replication fork reversal (RFR). RuvA specifically binds to HJ cruciform DNA, conferring on it an open structure. The RuvB hexamer acts as an ATP-dependent pump, pulling dsDNA into and through the RuvAB complex. HJ branch migration allows RuvC to scan DNA until it finds its consensus sequence, where it cleaves and resolves the cruciform DNA. The polypeptide is Holliday junction branch migration complex subunit RuvA (Aeromonas salmonicida (strain A449)).